A 294-amino-acid polypeptide reads, in one-letter code: Cytidine deaminase (294 aa).

CMP/dCMP-type deaminase domains lie at 48 to 168 (DEDA…FGPK) and 186 to 294 (LTGD…VLLG). 89-91 (NME) contributes to the substrate binding site. A Zn(2+)-binding site is contributed by His-102. The active-site Proton donor is Glu-104. Positions 129 and 132 each coordinate Zn(2+).

It belongs to the cytidine and deoxycytidylate deaminase family. Homodimer. The cofactor is Zn(2+).

It catalyses the reaction cytidine + H2O + H(+) = uridine + NH4(+). It carries out the reaction 2'-deoxycytidine + H2O + H(+) = 2'-deoxyuridine + NH4(+). This enzyme scavenges exogenous and endogenous cytidine and 2'-deoxycytidine for UMP synthesis. The chain is Cytidine deaminase from Escherichia fergusonii (strain ATCC 35469 / DSM 13698 / CCUG 18766 / IAM 14443 / JCM 21226 / LMG 7866 / NBRC 102419 / NCTC 12128 / CDC 0568-73).